A 524-amino-acid chain; its full sequence is MNNVGRPTRPEAANDAANGHETLTGARGLLQDEALIFELDGWNKTGVDLPPVTAAPSSDLNGLLRDAPIGLPGLSEPETVRHYVRLSQKNHAIDLALYPLGSCTMKHNPRLNEKMARLPGFSDIHPLQPQSTVQGALELMDRLAHWLKTLTGMPAVALTPKAGAHGELCGLLAIRAAHEAAGNGHRKTVLAPTSAHGTNPATAAFVGYTVVEIAQTEDGRVDLADLESKLGDHVAAIMVTNPNTCGLFERDVVEIARLTHAAGAYFYCDGANFNAIVGRVRPGDLGVDAMHINLHKTFSTPHGGGGPGAGPVVLSEALAPFAPTPWLTHGDNGFELAEHAGDDDAKTAFGRMSAFHGQMGMYVRAYAYMLSHGADGLRQVAEDAVLNANYIKAQLKDVMSPAFPEGPCMHEALFDDSWLEGTGVTTLDFAKAMIDEGFHPMTMYFPLVVHGAMLIEPTETESKHELDRFIAALRALAGAAKAGDTERFKGAPFHAPLRRLDETQAARKPRLRWKPVAAAPLAAE.

Lys296 carries the N6-(pyridoxal phosphate)lysine modification.

This sequence belongs to the GcvP family. C-terminal subunit subfamily. In terms of assembly, the glycine cleavage system is composed of four proteins: P, T, L and H. In this organism, the P 'protein' is a heterodimer of two subunits. Pyridoxal 5'-phosphate serves as cofactor.

It carries out the reaction N(6)-[(R)-lipoyl]-L-lysyl-[glycine-cleavage complex H protein] + glycine + H(+) = N(6)-[(R)-S(8)-aminomethyldihydrolipoyl]-L-lysyl-[glycine-cleavage complex H protein] + CO2. Its function is as follows. The glycine cleavage system catalyzes the degradation of glycine. The P protein binds the alpha-amino group of glycine through its pyridoxal phosphate cofactor; CO(2) is released and the remaining methylamine moiety is then transferred to the lipoamide cofactor of the H protein. The polypeptide is Probable glycine dehydrogenase (decarboxylating) subunit 2 (Caulobacter vibrioides (strain ATCC 19089 / CIP 103742 / CB 15) (Caulobacter crescentus)).